Consider the following 1456-residue polypeptide: MLHHCVLHIICALFFFLPLGGADSNYAISKLGTASKSQKSLIVNFSKSRNILLLDATGTLLLSQDDGTSWQDAVSNSDPAVVEQLYQHPFEDDIVYAITKESDILVSEDAGLTWFTVTMPPKTVIEAQPFEFNARQSQSVILNAARCESGSIWTGVTCYPFTYYTYDNFRNLDSVHDSIVSCTFAVGTVEFAGQDEDQMLCLIRENDVDLQAPFNQQLISVSKGFESIDYVVFDPYYGSLGTESVVAVGQYLVAAVVDVNSKKLKLHYSTDGQIWVPITFINAPSIGSLTVTRSTSLTLGVDVESTNLKNPVGEFYTISPSDAYAVRRLNDTNRDTRGYVDVIELDYLNNTILANTVANTEDLYKRASRQKELVTKISHDGGFSWTQLERPVDLECEGDDAEDCHLHLHLGITETKFGSLSPDRLPGVIMALGSVGTHLQPLSDSDLFISEDAGRSWYLSLQGPHYYSSSAYGSVFVAVKANENSKLIYYSLDFGREWESLEVEASFRALEIIPPKSLDSLTFLIRAKVKKEESFIAIDFSSILSRECTFDEKKVANGDFELWYPFVMDDTPQCLMGRIEYYLRKKRAVSCVVRNEVPVHSFVEQICTCESKDYECSTYFEPSDHFTCEVNPESLDPLCRVDPDATLQLKPYRILLGNSCVPKKKEEKEKSISMKCPKLDHRKDIHMYHHKIQDTISNIVYMEGTGEPDSTTELLLTSSQKVLFSYDFGEEWLEFDEKKNPSFYGIYPHAFLKDTAFLLTKDRKIYFTNNKGRSFYRLDAPSPPNVVGYPVFNFHSLHPNWVMYMGSENCDDSFYEDCRSVVYLSFDSGASWQKLPDELEYCSWVLGERLLVEDKLLFCNRRRAAADSIGYDLVASTDFFETEASSIRENVLGFLLADEYVVIAALTDDETSLSMHVSVNGRNFSPCIFPQNIQVHSQQAYTILSSKTRALFIHVTLSSRKGAEWGSVLKSNSNGTYFVNVLDKVNRNELGYVDFEKVEGLESIALANVVLNSDEAFNGEEKRLGTLITFNDGIDWERLYLIDAKKHYPHCDSKCSLHFHGFTERSVFSDPTSSSAATGIIFGIGSYSYYLEPYETSQTFISRDGGVHWELIFDSPHQWAFVDSGSLLVAVPSTNKTNILYYSEDEGRSWIAYQFAEDTYLIEDLSTAPSGNSQRILVLAKGKKSSETISFTVDFSHLRSRVCVFDFNDQRDFASWTPAGRDGKPMCLFGHKTAFYRRKPGRDCFIGNTPYVSDTIISNCQCTRMDYECNYNYERIAGGTCRLVSGAEPPLQQEEQCAAEGAIEWMEPTAYKRIPLTTCEGGLVLDESTTHPCPGKEDDYHKIHPGTPVWLIIMLVLLSVFLSTIVGAWVYTKAQSYLVGAIRLGEDPADETVFAKLMTRIESVVTAVPIFFSAAYHLVRSVFVRQDRSMSLDDYDNFEGMEDAAFLEVDDIETSE.

A signal peptide spans 1–22 (MLHHCVLHIICALFFFLPLGGA). Topologically, residues 23-1348 (DSNYAISKLG…DYHKIHPGTP (1326 aa)) are lumenal. Asn44 carries an N-linked (GlcNAc...) asparagine glycan. BNR repeat units follow at residues 62-71 (LSQDDGTSWQ) and 106-114 (VSEDAGLTW). N-linked (GlcNAc...) asparagine glycans are attached at residues Asn330 and Asn349. BNR repeat units lie at residues 448 to 458 (FISEDAGRSWY), 489 to 499 (YYSLDFGREWE), and 823 to 834 (YLSFDSGASWQK). Asn974 is a glycosylation site (N-linked (GlcNAc...) asparagine). Residues 1100–1110 (FISRDGGVHWE) form a BNR 6 repeat. N-linked (GlcNAc...) asparagine glycosylation is present at Asn1135. One copy of the BNR 7 repeat lies at 1141–1150 (YYSEDEGRSW). Residues 1349 to 1369 (VWLIIMLVLLSVFLSTIVGAW) traverse the membrane as a helical segment. Residues 1370 to 1456 (VYTKAQSYLV…LEVDDIETSE (87 aa)) lie on the Cytoplasmic side of the membrane.

Belongs to the VPS10-related sortilin family.

The protein resides in the golgi apparatus. It is found in the trans-Golgi network membrane. It localises to the prevacuolar compartment membrane. Its function is as follows. Functions as a sorting receptor in the Golgi compartment required for the intracellular sorting and delivery of soluble vacuolar proteins, like carboxypeptidase Y (CPY) and proteinase A. Executes multiple rounds of sorting by cycling between the late Golgi and a prevacuolar endosome-like compartment. This is Vacuolar protein sorting/targeting protein 10 (vps10) from Schizosaccharomyces japonicus (strain yFS275 / FY16936) (Fission yeast).